We begin with the raw amino-acid sequence, 474 residues long: 3-isopropylmalate dehydratase large subunit (474 aa).

[4Fe-4S] cluster is bound by residues Cys353, Cys414, and Cys417.

The protein belongs to the aconitase/IPM isomerase family. LeuC type 1 subfamily. Heterodimer of LeuC and LeuD. It depends on [4Fe-4S] cluster as a cofactor.

It carries out the reaction (2R,3S)-3-isopropylmalate = (2S)-2-isopropylmalate. Its pathway is amino-acid biosynthesis; L-leucine biosynthesis; L-leucine from 3-methyl-2-oxobutanoate: step 2/4. Functionally, catalyzes the isomerization between 2-isopropylmalate and 3-isopropylmalate, via the formation of 2-isopropylmaleate. This Xylella fastidiosa (strain M12) protein is 3-isopropylmalate dehydratase large subunit.